The primary structure comprises 241 residues: 1-(5-phosphoribosyl)-5-[(5-phosphoribosylamino)methylideneamino] imidazole-4-carboxamide isomerase (241 aa).

D10 functions as the Proton acceptor in the catalytic mechanism. D131 acts as the Proton donor in catalysis.

This sequence belongs to the HisA/HisF family.

It localises to the cytoplasm. It carries out the reaction 1-(5-phospho-beta-D-ribosyl)-5-[(5-phospho-beta-D-ribosylamino)methylideneamino]imidazole-4-carboxamide = 5-[(5-phospho-1-deoxy-D-ribulos-1-ylimino)methylamino]-1-(5-phospho-beta-D-ribosyl)imidazole-4-carboxamide. It participates in amino-acid biosynthesis; L-histidine biosynthesis; L-histidine from 5-phospho-alpha-D-ribose 1-diphosphate: step 4/9. This Hyphomonas neptunium (strain ATCC 15444) protein is 1-(5-phosphoribosyl)-5-[(5-phosphoribosylamino)methylideneamino] imidazole-4-carboxamide isomerase.